Reading from the N-terminus, the 454-residue chain is UDP-N-acetylmuramoylalanine--D-glutamate ligase (454 aa).

Residue 119-125 (GSNGKTT) coordinates ATP.

Belongs to the MurCDEF family.

The protein resides in the cytoplasm. The enzyme catalyses UDP-N-acetyl-alpha-D-muramoyl-L-alanine + D-glutamate + ATP = UDP-N-acetyl-alpha-D-muramoyl-L-alanyl-D-glutamate + ADP + phosphate + H(+). It functions in the pathway cell wall biogenesis; peptidoglycan biosynthesis. Functionally, cell wall formation. Catalyzes the addition of glutamate to the nucleotide precursor UDP-N-acetylmuramoyl-L-alanine (UMA). This Latilactobacillus sakei subsp. sakei (strain 23K) (Lactobacillus sakei subsp. sakei) protein is UDP-N-acetylmuramoylalanine--D-glutamate ligase.